The sequence spans 829 residues: Probable receptor-like protein kinase At5g59700 (829 aa).

Residues 1 to 24 (MGGEKFGFLIWILSIPCLIFLCYG) form the signal peptide. Over 25-406 (YVPVDNYLIN…SSTTKKNVGM (382 aa)) the chain is Extracellular. Residues N40, N216, N279, and N380 are each glycosylated (N-linked (GlcNAc...) asparagine). A helical transmembrane segment spans residues 407 to 427 (IIGLTIGSLLALVVLGGFFVL). Over 428-829 (YKKRGRDQDG…FSQLIKSEGR (402 aa)) the chain is Cytoplasmic. One can recognise a Protein kinase domain in the interval 482-755 (FDENRAIGVG…GDVLWNLEYA (274 aa)). Residues 488 to 496 (IGVGGFGKV) and K510 contribute to the ATP site. Catalysis depends on D606, which acts as the Proton acceptor.

This sequence belongs to the protein kinase superfamily. Ser/Thr protein kinase family.

The protein localises to the cell membrane. This Arabidopsis thaliana (Mouse-ear cress) protein is Probable receptor-like protein kinase At5g59700.